Here is a 217-residue protein sequence, read N- to C-terminus: Thymidylate kinase (217 aa).

16–23 (GIDGAGKT) is a binding site for ATP.

Belongs to the thymidylate kinase family.

The catalysed reaction is dTMP + ATP = dTDP + ADP. Functionally, phosphorylation of dTMP to form dTDP in both de novo and salvage pathways of dTTP synthesis. In Xylella fastidiosa (strain M23), this protein is Thymidylate kinase.